The sequence spans 199 residues: dITP/XTP pyrophosphatase (199 aa).

8-13 (SGNAGK) lines the substrate pocket. D69 functions as the Proton acceptor in the catalytic mechanism. D69 is a Mg(2+) binding site. Substrate contacts are provided by residues S70, 154 to 157 (FGYN), K177, and 182 to 183 (HR).

The protein belongs to the HAM1 NTPase family. As to quaternary structure, homodimer. It depends on Mg(2+) as a cofactor.

It carries out the reaction XTP + H2O = XMP + diphosphate + H(+). It catalyses the reaction dITP + H2O = dIMP + diphosphate + H(+). The catalysed reaction is ITP + H2O = IMP + diphosphate + H(+). Pyrophosphatase that catalyzes the hydrolysis of nucleoside triphosphates to their monophosphate derivatives, with a high preference for the non-canonical purine nucleotides XTP (xanthosine triphosphate), dITP (deoxyinosine triphosphate) and ITP. Seems to function as a house-cleaning enzyme that removes non-canonical purine nucleotides from the nucleotide pool, thus preventing their incorporation into DNA/RNA and avoiding chromosomal lesions. This Xylella fastidiosa (strain 9a5c) protein is dITP/XTP pyrophosphatase.